Reading from the N-terminus, the 130-residue chain is MAKVYYYGTGRRKKSVARVRLVPGEGKFSINDRSLDDYFGLETLKVIVKQPLTLTDTLTKFDVICKVIGGGFTGQAGAIRHGISRALLKADEELRPALKKAGFLTRDPRMKERKKYGLKKARRAPQFSKR.

The interval 104–130 (LTRDPRMKERKKYGLKKARRAPQFSKR) is disordered. Basic residues predominate over residues 111–130 (KERKKYGLKKARRAPQFSKR).

It belongs to the universal ribosomal protein uS9 family.

The chain is Small ribosomal subunit protein uS9 from Ruminiclostridium cellulolyticum (strain ATCC 35319 / DSM 5812 / JCM 6584 / H10) (Clostridium cellulolyticum).